The primary structure comprises 660 residues: Putative ABC transporter ATP-binding MG390 homolog (660 aa).

Positions 6-126 (QEQPNECGIC…KQWTGYAATV (121 aa)) constitute a Peptidase C39 domain. C12 is an active-site residue. Helical transmembrane passes span 150–170 (LIIFYVFIELIIIGISTLLAT), 188–208 (IVVFVVFFLVLKGLYLLLYAL), 265–285 (HIPNLIISCTVALIIGTLIGI), 290–310 (FLWIAIVQIVVNCAIFLYDFF), 379–399 (SFAQQVFDFLILALGIIGIIE), and 402–422 (YTLAFLFYIFSIQALFSAYAT). The 197-residue stretch at 464 to 660 (INLNNCSITL…INLSPYLQQT (197 aa)) folds into the ABC transporter domain. Position 494-501 (494-501 (GENGSGKS)) interacts with ATP.

This sequence belongs to the ABC transporter superfamily.

The protein resides in the cell membrane. The protein is Putative ABC transporter ATP-binding MG390 homolog of Mycoplasma pneumoniae (strain ATCC 29342 / M129 / Subtype 1) (Mycoplasmoides pneumoniae).